Here is a 147-residue protein sequence, read N- to C-terminus: Small ribosomal subunit protein uS12 (147 aa).

Belongs to the universal ribosomal protein uS12 family. Part of the 30S ribosomal subunit.

Its function is as follows. With S4 and S5 plays an important role in translational accuracy. Located at the interface of the 30S and 50S subunits. This chain is Small ribosomal subunit protein uS12, found in Thermofilum pendens (strain DSM 2475 / Hrk 5).